The primary structure comprises 118 residues: Ribonuclease P protein component (118 aa).

Belongs to the RnpA family. In terms of assembly, consists of a catalytic RNA component (M1 or rnpB) and a protein subunit.

The catalysed reaction is Endonucleolytic cleavage of RNA, removing 5'-extranucleotides from tRNA precursor.. In terms of biological role, RNaseP catalyzes the removal of the 5'-leader sequence from pre-tRNA to produce the mature 5'-terminus. It can also cleave other RNA substrates such as 4.5S RNA. The protein component plays an auxiliary but essential role in vivo by binding to the 5'-leader sequence and broadening the substrate specificity of the ribozyme. The protein is Ribonuclease P protein component of Rickettsia peacockii (strain Rustic).